A 510-amino-acid polypeptide reads, in one-letter code: Flagellin A (510 aa).

Belongs to the bacterial flagellin family. Heteromer of FlaA and FlaB. FlaB is located proximal to the hook while the remainder of the filament is composed of the predominant FlaA.

It is found in the secreted. It localises to the bacterial flagellum. In terms of biological role, flagellin is the subunit protein which polymerizes to form the filaments of bacterial flagella. Important for motility and virulence. In Helicobacter pylori (strain ATCC 700392 / 26695) (Campylobacter pylori), this protein is Flagellin A (flaA).